The sequence spans 1400 residues: MMLSRPKPGESEVDLLRFQSQFLEAGAAPAVQLVKGSRRRGDAHPDQLPPQDHRDVVMLDSLPDLPPALLPAPSKRARPSPGRPLPHDEDPEERLNRHDEHITAVLSKIVERDTSSVTVTLPVPSGVAFPPVFHRSQERQVKPAASSKRSIFAQEIAARRVSDNRAPSAEQVVPSPDAPEGAVPCETPSSKDRGSQLPGRSHSFHRPNLITGKGLRSQAAVQEVQTIHEENVARLQAMDPEEILKEQQQLLAQLDPSLVAFLRAHNHTREQTETKATKEQNPERPSVPVSKEEPIMSTCTGESGTRDKLEDKLEDKLQPRTPALKLPMTPNKEWLHMDTVELEKLHWTQDLPPLRRQQTQERMQARFSLQGELLEPDVDLPTHLGLHHHGEEAERAGYSLQELFHLTRSQVSQQRALALHVLSHIVGRAQAGEFGDRLVGSVLRLLLDAGFLFLLRFSLDDRIDSVIAAAVRALRALLVAPGDEELLDSTFSWYHGASVFPMMPSHDDKEDEDEDEELTKEKVNRKTPEEGSRPPPDLARHDVIKGLLATNLLPRFRYVLEVTCPGPSVVLDILAVLIRLARHSLESAMRVLECPRLMETIVREFLPTSWSPIGVGPAPSLYKVPCAAAMKLLRVLASAGRNIAARLLSSFDVRSRLCRFIAEAPRDLALPFEEAEILTTEAFRLWAVAASYGQGGDLYRELYPVLMRALQTLPPELSTHPLQPLSMQRMASLLTLLTQLTLAASTQPEATSGSVESCVVAIPSSITWTHVSGLKPLVEPCLKQTLKFLRRPDVWNALGPVPSACLLFLGAYYQTWSQQSGLCPEDWLQDMERFLDEFLLPLLSQPPLGRMWDSLRDCSPLCNPLSCASTPEALPSLVSLGCAGGCPPLSVAGSASPFPFLTALLSLINTLGQIHKGLCRQLAVVLTAPGLQNYFLQCVAPAPAPQLTPFSAWALRHEYHLQYLVLSLAQKAATSQPEPAASTALHHVMALVLLSRLLPGSEFLAHELLLSCVFRLGFLPENASGGPEAADFSDGLSLGNSGDPHCRRGALLVQACQDLPSIRSCYLAHCSPARASLLTSQALYRGELPRVSSLLLPVPKEPLLPTDWPFQPLIHLYHRASDTPSGLPAADTVGITMRVLQWVLVLESWRPEALWAVPPAARLARLMCVYLVDSELFRETPIQRLVAALLARLCQPQVLPNLKLDCPLPGLTSFPDLYASFLDHFEAVSFGDHLFGALVLLPLQRRFSVTLRLALFGEHVGVLRALGLPLAQLPVPLECYTEPAEDSLALLQLYFRALVTGALHARWCPVLYTVAVAHVNSFVFCQDPKSSDEVKAARRSMLQKVWLLADKDLRQHLLHYKLPNSSLPEGFELYPQLPRLRQQYLQTLPTEVLQNGGFKT.

Disordered stretches follow at residues 35 to 54, 60 to 95, 161 to 215, and 269 to 310; these read KGSRRRGDAHPDQLPPQDHR, DSLPDLPPALLPAPSKRARPSPGRPLPHDEDPEERL, VSDN…GKGL, and REQT…DKLE. Composition is skewed to basic and acidic residues over residues 39 to 54 and 85 to 95; these read RRGDAHPDQLPPQDHR and LPHDEDPEERL. Residues 269-282 are compositionally biased toward basic and acidic residues; it reads REQTETKATKEQNP. Thr-329 bears the Phosphothreonine mark. The interval 504–539 is disordered; sequence PSHDDKEDEDEDEELTKEKVNRKTPEEGSRPPPDLA. A compositionally biased stretch (acidic residues) spans 509-518; that stretch reads KEDEDEDEEL. The segment covering 519–539 has biased composition (basic and acidic residues); it reads TKEKVNRKTPEEGSRPPPDLA.

Belongs to the RPAP1 family. In terms of assembly, part of an RNA polymerase II complex that contains POLR2A, POLR2B, POLR2C, POLR2D, POLR2E, POLR2F, POLR2G, POLR2H, POLR2I, POLR2J, POLR2K, POLR2L, RPAP1, FCP1 plus the general transcription factors TFIIB and TFIIF.

Its subcellular location is the nucleus. Functionally, forms an interface between the RNA polymerase II enzyme and chaperone/scaffolding protein, suggesting that it is required to connect RNA polymerase II to regulators of protein complex formation. Required for interaction of the RNA polymerase II complex with acetylated histone H3. In Rattus norvegicus (Rat), this protein is RNA polymerase II-associated protein 1 (Rpap1).